The sequence spans 468 residues: UDP-N-acetylmuramoyl-L-alanine--L-glutamate ligase (468 aa).

Glycine 122–threonine 128 is a binding site for ATP.

This sequence belongs to the MurCDEF family. MurD2 subfamily.

Its subcellular location is the cytoplasm. The enzyme catalyses UDP-N-acetyl-alpha-D-muramoyl-L-alanine + L-glutamate + ATP = UDP-N-acetyl-alpha-D-muramoyl-L-alanyl-L-glutamate + ADP + phosphate + H(+). It functions in the pathway cell wall biogenesis; peptidoglycan biosynthesis. Its function is as follows. Cell wall formation. Catalyzes the addition of L-glutamate to the nucleotide precursor UDP-N-acetylmuramoyl-L-alanine. The protein is UDP-N-acetylmuramoyl-L-alanine--L-glutamate ligase of Xanthomonas campestris pv. campestris (strain 8004).